The primary structure comprises 232 residues: Small ribosomal subunit protein uS3 (232 aa).

A KH type-2 domain is found at 39 to 107; it reads IRKFLKKELF…DVAINIKEEK (69 aa). The tract at residues 213 to 232 is disordered; that stretch reads QPEPAEEKKGGRRPSRKRGE. Over residues 222–232 the composition is skewed to basic residues; sequence GGRRPSRKRGE.

This sequence belongs to the universal ribosomal protein uS3 family. Part of the 30S ribosomal subunit. Forms a tight complex with proteins S10 and S14.

Functionally, binds the lower part of the 30S subunit head. Binds mRNA in the 70S ribosome, positioning it for translation. In Sulfurovum sp. (strain NBC37-1), this protein is Small ribosomal subunit protein uS3.